The chain runs to 156 residues: Ribonuclease H (156 aa).

One can recognise an RNase H type-1 domain in the interval 3–144 (ELKQIRIYTD…CDTLAREAAE (142 aa)). Mg(2+) contacts are provided by Asp12, Glu50, Asp72, and Asp136.

Belongs to the RNase H family. Monomer. The cofactor is Mg(2+).

Its subcellular location is the cytoplasm. It catalyses the reaction Endonucleolytic cleavage to 5'-phosphomonoester.. In terms of biological role, endonuclease that specifically degrades the RNA of RNA-DNA hybrids. In Shewanella amazonensis (strain ATCC BAA-1098 / SB2B), this protein is Ribonuclease H.